Reading from the N-terminus, the 142-residue chain is Large ribosomal subunit protein uL11 (142 aa).

Belongs to the universal ribosomal protein uL11 family. Part of the ribosomal stalk of the 50S ribosomal subunit. Interacts with L10 and the large rRNA to form the base of the stalk. L10 forms an elongated spine to which L12 dimers bind in a sequential fashion forming a multimeric L10(L12)X complex. Post-translationally, one or more lysine residues are methylated.

Its function is as follows. Forms part of the ribosomal stalk which helps the ribosome interact with GTP-bound translation factors. This is Large ribosomal subunit protein uL11 from Solibacter usitatus (strain Ellin6076).